The chain runs to 142 residues: Small heat shock protein IbpB (142 aa).

Residues 26–137 (TGESQSFPPY…APQRIAISER (112 aa)) enclose the sHSP domain.

This sequence belongs to the small heat shock protein (HSP20) family. Homodimer. Forms homomultimers of about 100-150 subunits at optimal growth temperatures. Conformation changes to oligomers at high temperatures or high ionic concentrations. The decrease in size of the multimers is accompanied by an increase in chaperone activity.

It is found in the cytoplasm. In terms of biological role, associates with aggregated proteins, together with IbpA, to stabilize and protect them from irreversible denaturation and extensive proteolysis during heat shock and oxidative stress. Aggregated proteins bound to the IbpAB complex are more efficiently refolded and reactivated by the ATP-dependent chaperone systems ClpB and DnaK/DnaJ/GrpE. Its activity is ATP-independent. The protein is Small heat shock protein IbpB of Citrobacter koseri (strain ATCC BAA-895 / CDC 4225-83 / SGSC4696).